We begin with the raw amino-acid sequence, 191 residues long: NAD(P)H-quinone oxidoreductase subunit 6, chloroplastic (191 aa).

Helical transmembrane passes span 10-30 (TIFL…ILLT), 32-52 (IVYS…LYLL), 61-81 (AQIL…VMLI), 89-109 (FFVY…SIFL), and 153-173 (FLLP…GAIT).

This sequence belongs to the complex I subunit 6 family. As to quaternary structure, NDH is composed of at least 16 different subunits, 5 of which are encoded in the nucleus.

Its subcellular location is the plastid. The protein localises to the chloroplast thylakoid membrane. The catalysed reaction is a plastoquinone + NADH + (n+1) H(+)(in) = a plastoquinol + NAD(+) + n H(+)(out). It carries out the reaction a plastoquinone + NADPH + (n+1) H(+)(in) = a plastoquinol + NADP(+) + n H(+)(out). NDH shuttles electrons from NAD(P)H:plastoquinone, via FMN and iron-sulfur (Fe-S) centers, to quinones in the photosynthetic chain and possibly in a chloroplast respiratory chain. The immediate electron acceptor for the enzyme in this species is believed to be plastoquinone. Couples the redox reaction to proton translocation, and thus conserves the redox energy in a proton gradient. This Marchantia polymorpha (Common liverwort) protein is NAD(P)H-quinone oxidoreductase subunit 6, chloroplastic (ndhG).